The following is an 88-amino-acid chain: Small ribosomal subunit protein eS21 (88 aa).

It belongs to the eukaryotic ribosomal protein eS21 family. Component of the 40S small ribosomal subunit.

The protein resides in the cytoplasm. It localises to the cytosol. It is found in the rough endoplasmic reticulum. The polypeptide is Small ribosomal subunit protein eS21 (rps-21) (Caenorhabditis elegans).